A 277-amino-acid chain; its full sequence is Urease accessory protein UreD (277 aa).

The interval 1–20 (MRQTAQEDASPAPMQRAHGT) is disordered.

Belongs to the UreD family. As to quaternary structure, ureD, UreF and UreG form a complex that acts as a GTP-hydrolysis-dependent molecular chaperone, activating the urease apoprotein by helping to assemble the nickel containing metallocenter of UreC. The UreE protein probably delivers the nickel.

The protein localises to the cytoplasm. Required for maturation of urease via the functional incorporation of the urease nickel metallocenter. The polypeptide is Urease accessory protein UreD (Chelativorans sp. (strain BNC1)).